Consider the following 526-residue polypeptide: Probable di/tripeptide-binding protein 5 (526 aa).

The N-terminal stretch at 1-21 (MRLAAFSLFLAPLLLAQPAAA) is a signal peptide.

It belongs to the bacterial solute-binding protein 5 family. In terms of assembly, the complex is composed of two ATP-binding proteins (DppD and DppF), two transmembrane proteins (DppB and DppC) and a solute-binding protein (DppA5). Five orthologous SBPs (DppA1-A5) are present in P.aeruginosa, which increases the substrate specificity of the DppBCDF transporter.

Part of the ABC transporter DppABCDF involved in the uptake of various di/tripeptides. The polypeptide is Probable di/tripeptide-binding protein 5 (Pseudomonas aeruginosa (strain UCBPP-PA14)).